Reading from the N-terminus, the 816-residue chain is Protein kinase C-binding protein NELL2 (816 aa).

The signal sequence occupies residues 1-21 (MESRVLLRTFCLIFGLGAVWG). N-linked (GlcNAc...) asparagine glycosylation is found at asparagine 53, asparagine 225, asparagine 293, and asparagine 298. The 165-residue stretch at 64-228 (PRSIKASTAT…AQCPDLNRTC (165 aa)) folds into the Laminin G-like domain. One can recognise a VWFC 1 domain in the interval 272–331 (RTCTMKGTTYREFESWIDGCKNCTCLNGTIQCETLICPNPDCPLKSALAYVDGKCCKECK). In terms of domain architecture, EGF-like 1 spans 397–439 (GYDFCSERHNCMENSICRNLNDRAVCSCRDGFRALREDNAYCE). Disulfide bonds link cysteine 401–cysteine 413, cysteine 407–cysteine 422, and cysteine 424–cysteine 438. Residues aspartate 440, isoleucine 441, and glutamate 443 each coordinate Ca(2+). Positions 440 to 481 (DIDECAEGRHYCRENTMCVNTPGSFMCICKTGYIRIDDYSCT) constitute an EGF-like 2; calcium-binding domain. 9 disulfides stabilise this stretch: cysteine 444/cysteine 457, cysteine 451/cysteine 466, cysteine 468/cysteine 480, cysteine 486/cysteine 499, cysteine 493/cysteine 508, cysteine 510/cysteine 521, cysteine 525/cysteine 535, cysteine 529/cysteine 541, and cysteine 543/cysteine 552. Ca(2+) is bound by residues asparagine 459, threonine 460, and serine 463. One can recognise an EGF-like 3; calcium-binding domain in the interval 482-522 (EHDECITNQHNCDENALCFNTVGGHNCVCKPGYTGNGTTCK). Asparagine 517 carries an N-linked (GlcNAc...) asparagine glycan. One can recognise an EGF-like 4 domain in the interval 523 to 553 (AFCKDGCRNGGACIAANVCACPQGFTGPSCE). O-linked (GlcNAc...) threonine glycosylation occurs at threonine 548. Aspartate 555, isoleucine 556, and glutamate 558 together coordinate Ca(2+). One can recognise an EGF-like 5; calcium-binding domain in the interval 555–601 (DIDECSDGFVQCDSRANCINLPGWYHCECRDGYHDNGMFSPSGESCE). 3 disulfides stabilise this stretch: cysteine 559/cysteine 572, cysteine 566/cysteine 581, and cysteine 583/cysteine 600. Ca(2+)-binding residues include asparagine 574, leucine 575, and tryptophan 578. The Ca(2+) site is built by aspartate 602, isoleucine 603, and glutamate 605. Residues 602–637 (DIDECGTGRHSCANDTICFNLDGGYDCRCPHGKNCT) form the EGF-like 6; calcium-binding domain. 3 disulfide bridges follow: cysteine 606–cysteine 619, cysteine 613–cysteine 628, and cysteine 630–cysteine 636. N-linked (GlcNAc...) asparagine glycosylation occurs at asparagine 615. 3 residues coordinate Ca(2+): asparagine 621, leucine 622, and glycine 625. N-linked (GlcNAc...) asparagine glycosylation is present at asparagine 635. VWFC domains lie at 638–693 (GDCI…PECD) and 698–756 (SQCL…PRCV).

In terms of assembly, homotrimer. Binds to PRKCB. Interacts with NICOL1; this interaction triggers epididymal differentiation. Interacts (via the EGF domains) with ROBO3 (via Fibronectin type-III 1 domain) with a 3:3 stoichiometry; this interaction promotes oligomerization of ROBO3 resulting in the repulsion of commissural axons in the midline.

Its subcellular location is the secreted. Its function is as follows. Plays multiple roles in neural tissues, regulates neuronal proliferation, survival, differentiation, polarization, as well as axon guidance and synaptic functions. Plays an important role in axon development during neuronal differentiation through the MAPK intracellular signaling pathway. Via binding to its receptor ROBO3, plays a role in axon guidance, functioning as a repulsive axon guidance cue that contributes to commissural axon guidance to the midline. Required for neuron survival through the modulation of MAPK signaling pathways too. Involved in the regulation of hypothalamic GNRH secretion and the control of puberty. Functionally, epididymal-secreted protein that signals through a ROS1-pathway to regulate the epididymal initial segment (IS) maturation, sperm maturation and male fertility. The sequence is that of Protein kinase C-binding protein NELL2 from Homo sapiens (Human).